We begin with the raw amino-acid sequence, 87 residues long: RNA-binding protein Hfq (87 aa).

Positions 9–68 constitute a Sm domain; it reads DPFLNALRRERIPVSIYLVNGIKLQGQIESFDQFVILLKNTVSQMVYKHAISTVVPARAV.

This sequence belongs to the Hfq family. Homohexamer.

RNA chaperone that binds small regulatory RNA (sRNAs) and mRNAs to facilitate mRNA translational regulation in response to envelope stress, environmental stress and changes in metabolite concentrations. Also binds with high specificity to tRNAs. In Aeromonas salmonicida (strain A449), this protein is RNA-binding protein Hfq.